A 301-amino-acid chain; its full sequence is 33 kDa chaperonin (301 aa).

2 disulfides stabilise this stretch: cysteine 239-cysteine 241 and cysteine 272-cysteine 275.

This sequence belongs to the HSP33 family. Under oxidizing conditions two disulfide bonds are formed involving the reactive cysteines. Under reducing conditions zinc is bound to the reactive cysteines and the protein is inactive.

Its subcellular location is the cytoplasm. Redox regulated molecular chaperone. Protects both thermally unfolding and oxidatively damaged proteins from irreversible aggregation. Plays an important role in the bacterial defense system toward oxidative stress. In Nostoc sp. (strain PCC 7120 / SAG 25.82 / UTEX 2576), this protein is 33 kDa chaperonin.